We begin with the raw amino-acid sequence, 114 residues long: Probable 4-amino-4-deoxy-L-arabinose-phosphoundecaprenol flippase subunit ArnE (114 aa).

3 helical membrane passes run 38–58, 64–84, and 94–114; these read LTLRWLAIAVVSLGLGMLLWL, LPLSVAYPMLSFNFVLVTLAA, and LRHWLGVAAIMFGILLMSWHL. One can recognise an EamA domain in the interval 43–112; the sequence is LAIAVVSLGL…IMFGILLMSW (70 aa).

Belongs to the ArnE family. As to quaternary structure, heterodimer of ArnE and ArnF.

It is found in the cell inner membrane. It participates in bacterial outer membrane biogenesis; lipopolysaccharide biosynthesis. Functionally, translocates 4-amino-4-deoxy-L-arabinose-phosphoundecaprenol (alpha-L-Ara4N-phosphoundecaprenol) from the cytoplasmic to the periplasmic side of the inner membrane. This chain is Probable 4-amino-4-deoxy-L-arabinose-phosphoundecaprenol flippase subunit ArnE, found in Yersinia pseudotuberculosis serotype O:3 (strain YPIII).